Here is a 640-residue protein sequence, read N- to C-terminus: Glutamyl-tRNA(Gln) amidotransferase subunit E (640 aa).

It belongs to the GatB/GatE family. GatE subfamily. Heterodimer of GatD and GatE.

The catalysed reaction is L-glutamyl-tRNA(Gln) + L-glutamine + ATP + H2O = L-glutaminyl-tRNA(Gln) + L-glutamate + ADP + phosphate + H(+). In terms of biological role, allows the formation of correctly charged Gln-tRNA(Gln) through the transamidation of misacylated Glu-tRNA(Gln) in organisms which lack glutaminyl-tRNA synthetase. The reaction takes place in the presence of glutamine and ATP through an activated gamma-phospho-Glu-tRNA(Gln). The GatDE system is specific for glutamate and does not act on aspartate. This is Glutamyl-tRNA(Gln) amidotransferase subunit E from Methanopyrus kandleri (strain AV19 / DSM 6324 / JCM 9639 / NBRC 100938).